Consider the following 57-residue polypeptide: Large ribosomal subunit protein bL32 (57 aa).

Positions 1–20 are enriched in basic residues; that stretch reads MAVPKKKTSKGKRNQRHAVW. The interval 1 to 23 is disordered; that stretch reads MAVPKKKTSKGKRNQRHAVWKAK.

It belongs to the bacterial ribosomal protein bL32 family.

In Prochlorococcus marinus (strain SARG / CCMP1375 / SS120), this protein is Large ribosomal subunit protein bL32.